The sequence spans 402 residues: Probable 2,3-bisphosphoglycerate-independent phosphoglycerate mutase (402 aa).

It belongs to the BPG-independent phosphoglycerate mutase family. A-PGAM subfamily.

The enzyme catalyses (2R)-2-phosphoglycerate = (2R)-3-phosphoglycerate. Its pathway is carbohydrate degradation; glycolysis; pyruvate from D-glyceraldehyde 3-phosphate: step 3/5. Functionally, catalyzes the interconversion of 2-phosphoglycerate and 3-phosphoglycerate. The chain is Probable 2,3-bisphosphoglycerate-independent phosphoglycerate mutase from Thermosipho africanus (strain TCF52B).